Here is a 260-residue protein sequence, read N- to C-terminus: Uroplakin-1b (260 aa).

Topologically, residues 1 to 12 (MAKDDSSVRCFQ) are cytoplasmic. A helical membrane pass occupies residues 13 to 38 (GLLIFGNVIVGMCGIALTAECIFFVS). Residues 39-60 (DQHSLYPLLEATDNDDIYGAAW) are Extracellular-facing. A helical membrane pass occupies residues 61–81 (IGMFVGICLFCLSVLGIVGIM). Topologically, residues 82-86 (KSNRK) are cytoplasmic. A helical transmembrane segment spans residues 87–107 (ILLAYFILMFIVYGFEVASCI). Over 108–229 (TAATQRDFFT…ELISGPMNRH (122 aa)) the chain is Extracellular. A helical membrane pass occupies residues 230–250 (AWGVAWFGFAILCWTFWVLLG). The Cytoplasmic segment spans residues 251 to 260 (TMFYWSRIEY).

It belongs to the tetraspanin (TM4SF) family. Heterodimer with uroplakin-3A (UPK3A) or uroplakin-3B (UPK3B).

Its subcellular location is the membrane. Component of the asymmetric unit membrane (AUM); a highly specialized biomembrane elaborated by terminally differentiated urothelial cells. The protein is Uroplakin-1b (UPK1B) of Neovison vison (American mink).